The primary structure comprises 180 residues: ATP synthase subunit b, plastid (180 aa).

Residues 27–49 (LVTTLINIAVVLSLLIVFGKGFL) traverse the membrane as a helical segment.

This sequence belongs to the ATPase B chain family. As to quaternary structure, F-type ATPases have 2 components, F(1) - the catalytic core - and F(0) - the membrane proton channel. F(1) has five subunits: alpha(3), beta(3), gamma(1), delta(1), epsilon(1). F(0) has four main subunits: a(1), b(1), b'(1) and c(10-14). The alpha and beta chains form an alternating ring which encloses part of the gamma chain. F(1) is attached to F(0) by a central stalk formed by the gamma and epsilon chains, while a peripheral stalk is formed by the delta, b and b' chains.

The protein localises to the plastid membrane. In terms of biological role, f(1)F(0) ATP synthase produces ATP from ADP in the presence of a proton or sodium gradient. F-type ATPases consist of two structural domains, F(1) containing the extramembraneous catalytic core and F(0) containing the membrane proton channel, linked together by a central stalk and a peripheral stalk. During catalysis, ATP synthesis in the catalytic domain of F(1) is coupled via a rotary mechanism of the central stalk subunits to proton translocation. Functionally, component of the F(0) channel, it forms part of the peripheral stalk, linking F(1) to F(0). The protein is ATP synthase subunit b, plastid of Cuscuta gronovii (Common dodder).